A 106-amino-acid chain; its full sequence is Immunoglobulin lambda constant 2 (106 aa).

Residues 7-101 (PSVTLFPPSS…EGSTVEKTVA (95 aa)) enclose the Ig-like domain. C28 and C87 form a disulfide bridge.

Immunoglobulins are composed of two identical heavy chains and two identical light chains; disulfide-linked.

Its subcellular location is the secreted. The protein localises to the cell membrane. Constant region of immunoglobulin light chains. Immunoglobulins, also known as antibodies, are membrane-bound or secreted glycoproteins produced by B lymphocytes. In the recognition phase of humoral immunity, the membrane-bound immunoglobulins serve as receptors which, upon binding of a specific antigen, trigger the clonal expansion and differentiation of B lymphocytes into immunoglobulins-secreting plasma cells. Secreted immunoglobulins mediate the effector phase of humoral immunity, which results in the elimination of bound antigens. The antigen binding site is formed by the variable domain of one heavy chain, together with that of its associated light chain. Thus, each immunoglobulin has two antigen binding sites with remarkable affinity for a particular antigen. The variable domains are assembled by a process called V-(D)-J rearrangement and can then be subjected to somatic hypermutations which, after exposure to antigen and selection, allow affinity maturation for a particular antigen. The protein is Immunoglobulin lambda constant 2 of Homo sapiens (Human).